Here is a 155-residue protein sequence, read N- to C-terminus: NADPH-dependent 7-cyano-7-deazaguanine reductase (155 aa).

The active-site Thioimide intermediate is the Cys53. Asp60 acts as the Proton donor in catalysis. Substrate-binding positions include 75–77 (VES) and 94–95 (HE).

Belongs to the GTP cyclohydrolase I family. QueF type 1 subfamily.

The protein resides in the cytoplasm. It catalyses the reaction 7-aminomethyl-7-carbaguanine + 2 NADP(+) = 7-cyano-7-deazaguanine + 2 NADPH + 3 H(+). It participates in tRNA modification; tRNA-queuosine biosynthesis. Functionally, catalyzes the NADPH-dependent reduction of 7-cyano-7-deazaguanine (preQ0) to 7-aminomethyl-7-deazaguanine (preQ1). The polypeptide is NADPH-dependent 7-cyano-7-deazaguanine reductase (Brucella anthropi (strain ATCC 49188 / DSM 6882 / CCUG 24695 / JCM 21032 / LMG 3331 / NBRC 15819 / NCTC 12168 / Alc 37) (Ochrobactrum anthropi)).